A 310-amino-acid chain; its full sequence is Methionyl-tRNA formyltransferase (310 aa).

111-114 (SLLP) is a (6S)-5,6,7,8-tetrahydrofolate binding site.

It belongs to the Fmt family.

It catalyses the reaction L-methionyl-tRNA(fMet) + (6R)-10-formyltetrahydrofolate = N-formyl-L-methionyl-tRNA(fMet) + (6S)-5,6,7,8-tetrahydrofolate + H(+). Functionally, attaches a formyl group to the free amino group of methionyl-tRNA(fMet). The formyl group appears to play a dual role in the initiator identity of N-formylmethionyl-tRNA by promoting its recognition by IF2 and preventing the misappropriation of this tRNA by the elongation apparatus. This is Methionyl-tRNA formyltransferase from Rhodopseudomonas palustris (strain TIE-1).